Consider the following 489-residue polypeptide: Hydantoin permease (489 aa).

The next 12 helical transmembrane spans lie at 30-50 (FSLA…IAAG), 58-78 (VWQV…LLFF), 104-124 (LIPI…QTWL), 144-164 (LWIV…ITFI), 167-187 (MNVF…YLML), 207-227 (MPFS…VVSI), 258-278 (LGMV…MVLV), 299-321 (AILF…NLLS), 339-359 (GVIV…AGVL), 362-382 (FLNL…SDYF), 405-424 (RGVN…VSFL), and 428-445 (LMFV…IPAM). 2 residues coordinate Na(+): Ala-38 and Ile-41. Residue Gln-121 participates in substrate binding. Gly-219 lines the substrate pocket. Na(+)-binding residues include Ala-309, Ser-312, and Thr-313. Asn-318 contacts substrate. The disordered stretch occupies residues 468–489 (PIGPVAPADESATANTKEQNQR). Positions 479–489 (ATANTKEQNQR) are enriched in polar residues.

Belongs to the purine-cytosine permease (2.A.39) family.

The protein resides in the membrane. Its activity is regulated as follows. Inhibited by dinitrophenol, 5-(2-naphthylmethyl)-D-hydantoin (D-NMH), 5-(2-naphthylmethyl)-L-hydantoin (L-NMH), 5-bromovinylhydantoin (BVH) and 5-indolylmethyl-L-hydantoin (L-IMH). The affinity of benzyl-hydantoin is increased over 10-fold in the presence of 15 mM of sodium. In terms of biological role, nucleobase-proton symporter that mediates the sodium-dependent binding and uptake of 5-aryl-substituted hydantoin compounds. 5-indolyl methyl hydantoin and 5-benzyl hydantoin are the preferred substrates, with selectivity for a hydrophobic substituent in position 5 of hydantoin and for the L isomer over the D isomer. The chain is Hydantoin permease from Microbacterium maritypicum (Microbacterium liquefaciens).